Here is a 304-residue protein sequence, read N- to C-terminus: MSNVLELTIPASTANLGVGFDSIGMALDKFLHLSVKETSGTKWEYIFHDDASKQLPTDETNFIYHVAQQVASKYSVDLPILCIEMRSDIPLARGLGSSASALVGAIYIANYFGDIQLSKHEVLQLATEIEGHPDNVAPTIYGGLIAGFYNDVSKETSVAHIDIPDVDVIVTIPTYELKTEASRRALPQKLTHSEAVKSSAISNTMICALAQHNYELAGKLMQQDGFHEPYRQHLIAEFDEVKTIASQHNAYATVISGAGPTILIFSRKENSGELVRSLNSQVVSCHSELVDINISGVKERIVYQ.

Position 90-100 (90-100 (PLARGLGSSAS)) interacts with ATP.

Belongs to the GHMP kinase family. Homoserine kinase subfamily.

It is found in the cytoplasm. The catalysed reaction is L-homoserine + ATP = O-phospho-L-homoserine + ADP + H(+). Its pathway is amino-acid biosynthesis; L-threonine biosynthesis; L-threonine from L-aspartate: step 4/5. Functionally, catalyzes the ATP-dependent phosphorylation of L-homoserine to L-homoserine phosphate. This Staphylococcus aureus (strain JH9) protein is Homoserine kinase.